Consider the following 210-residue polypeptide: Meiotic coiled-coil protein 7 (210 aa).

Positions 77–148 (KRSRESVLGS…LKTQLSNLNH (72 aa)) form a coiled coil.

It belongs to the MND1 family. In terms of assembly, interacts with meu13.

The protein localises to the cytoplasm. Its subcellular location is the nucleus. Functionally, required for meiotic recombination. The polypeptide is Meiotic coiled-coil protein 7 (mcp7) (Schizosaccharomyces pombe (strain 972 / ATCC 24843) (Fission yeast)).